Reading from the N-terminus, the 61-residue chain is Large ribosomal subunit protein uL30 (61 aa).

The protein belongs to the universal ribosomal protein uL30 family. Part of the 50S ribosomal subunit.

This Petrotoga mobilis (strain DSM 10674 / SJ95) protein is Large ribosomal subunit protein uL30.